The sequence spans 205 residues: Ribonuclease HII (205 aa).

The RNase H type-2 domain occupies 16 to 205; that stretch reads VSEVGIDEVG…KSFLNQSDLI (190 aa). A divalent metal cation-binding residues include Asp-22, Glu-23, and Asp-118.

It belongs to the RNase HII family. Mn(2+) is required as a cofactor. The cofactor is Mg(2+).

The protein localises to the cytoplasm. The enzyme catalyses Endonucleolytic cleavage to 5'-phosphomonoester.. Endonuclease that specifically degrades the RNA of RNA-DNA hybrids. The chain is Ribonuclease HII from Prochlorococcus marinus (strain MIT 9312).